A 498-amino-acid chain; its full sequence is Lysine--tRNA ligase (498 aa).

Residues glutamate 407 and glutamate 414 each contribute to the Mg(2+) site.

It belongs to the class-II aminoacyl-tRNA synthetase family. As to quaternary structure, homodimer. Mg(2+) is required as a cofactor.

Its subcellular location is the cytoplasm. It carries out the reaction tRNA(Lys) + L-lysine + ATP = L-lysyl-tRNA(Lys) + AMP + diphosphate. The polypeptide is Lysine--tRNA ligase (lysS) (Rhizobium meliloti (strain 1021) (Ensifer meliloti)).